Consider the following 232-residue polypeptide: Phosphate import ATP-binding protein PstB (232 aa).

The ABC transporter domain maps to 1 to 227; it reads MFNINMEIKE…PKDRRTENYI (227 aa). 18-25 contacts ATP; that stretch reads GPSGCGKT.

The protein belongs to the ABC transporter superfamily. Phosphate importer (TC 3.A.1.7) family. The complex is composed of two ATP-binding proteins (PstB), two transmembrane proteins (PstC and PstA) and a solute-binding protein (PstS).

The protein localises to the cell membrane. The enzyme catalyses phosphate(out) + ATP + H2O = ADP + 2 phosphate(in) + H(+). In terms of biological role, part of the ABC transporter complex PstSACB involved in phosphate import. Responsible for energy coupling to the transport system. This is Phosphate import ATP-binding protein PstB from Mycoplasma mycoides subsp. mycoides SC (strain CCUG 32753 / NCTC 10114 / PG1).